Consider the following 214-residue polypeptide: Protein DMP6 (214 aa).

The next 4 helical transmembrane spans lie at 52–72 (LANL…PICT), 83–103 (FMTA…SFTD), 143–163 (FIDF…VLFD), and 178–198 (VVEL…MVFA).

Belongs to the plant DMP1 protein family. Expressed constitutively in leaves, stems, flowers, siliques and roots (e.g. root hairs).

The protein localises to the vacuole membrane. Involved in membrane remodeling. This Arabidopsis thaliana (Mouse-ear cress) protein is Protein DMP6.